Here is a 1148-residue protein sequence, read N- to C-terminus: Envelopment polyprotein (1148 aa).

Residues 1-23 form the signal peptide; it reads MGKSSPVCLYLILQGLLLFDTVN. The Lumenal segment spans residues 24 to 496; it reads AKNLNELKME…PGLHGWATVL (473 aa). 6 cysteine pairs are disulfide-bonded: C34–C159, C68–C165, C117–C136, C141–C146, C183–C193, and C218–C257. An N-linked (GlcNAc...) asparagine; by host glycan is attached at N142. N-linked (GlcNAc...) asparagine; by host glycosylation is present at N357. 4 disulfides stabilise this stretch: C386-C445, C390-C399, C415-C434, and C462-C485. The N-linked (GlcNAc...) asparagine; by host glycan is linked to N409. A helical membrane pass occupies residues 497–517; the sequence is LLLTFCFGWVLIPTITMILLK. The Cytoplasmic portion of the chain corresponds to 518-637; that stretch reads ILIAFAYLCS…LSLFRYRSRF (120 aa). The tract at residues 526-543 is binding to the ribonucleoprotein; the sequence is CSKYNTDSKFRILVEKVK. 2 consecutive CCHC-type zinc fingers follow at residues 555–575 and 580–601; these read CEVC…RKSC and CPYC…FKVC. Binding to the ribonucleoprotein stretches follow at residues 598 to 615 and 621 to 635; these read FKVC…KKSL and MQGC…RYRS. Positions 621 to 644 constitute an ITAM domain; the sequence is MQGCYRTLSLFRYRSRFFVGLVWC. Residues 625-628 carry the YxxL motif; the sequence is YRTL. Residues 638-658 form a helical membrane-spanning segment; sequence FVGLVWCMLLVLELIVWAASA. The Lumenal portion of the chain corresponds to 659-1115; sequence ETQNLNDGWT…WVLGVLNGNW (457 aa). Cystine bridges form between C745/C780, C749/C787, C761/C894, C775/C905, C790/C913, C816/C825, C833/C842, and C873/C877. Residues 767–787 form a fusion loop region; it reads YEYETGWGCNPPDCPGVGTGC. N-linked (GlcNAc...) asparagine; by host glycosylation is present at N937. Cystine bridges form between C979–C1009, C1002–C1054, C1019–C1024, C1055–C1060, and C1094–C1098. The helical transmembrane segment at 1116–1136 threads the bilayer; the sequence is MVVAVLIALLILSIFLFALCC. The interval 1131–1148 is binding to the ribonucleoprotein; the sequence is LFALCCPRRPSYKKDHKP. Topologically, residues 1137 to 1148 are cytoplasmic; that stretch reads PRRPSYKKDHKP.

It belongs to the hantavirus envelope glycoprotein family. In terms of assembly, homodimer. Homotetramer; forms heterotetrameric Gn-Gc spikes in the pre-fusion conformation. Interacts (via C-terminus) with the nucleoprotein. Interacts with host TUFM; this interaction contributes to the virus-induced degradation of mitochondria by autophagy, which leads to degradation of host MAVS and inhibition of type I interferon (IFN) responses. Interacts with host MAP1LC3B; this interaction contributes to the virus-induced degradation of mitochondria by autophagy, which leads to degradation of host MAVS and inhibition of type I interferon (IFN) responses. As to quaternary structure, homodimer. Homotetramer; forms heterotetrameric Gn-Gc spikes in the pre-fusion conformation. Homotrimer; forms homotrimer in the post-fusion conformation at acidic pH. Interacts (via C-terminus) with the nucleoprotein. In terms of processing, envelope polyprotein precursor is quickly cleaved in vivo just after synthesis, presumably by host signal peptidase.

The protein resides in the virion membrane. It is found in the host cell surface. Its subcellular location is the host Golgi apparatus membrane. The protein localises to the host endoplasmic reticulum membrane. It localises to the host mitochondrion. Functionally, forms homotetramers with glycoprotein C at the surface of the virion. Attaches the virion to host cell receptors including integrin ITGAV/ITGB3. This attachment induces virion internalization predominantly through clathrin-dependent endocytosis. Mediates the assembly and budding of infectious virus particles through its interaction with the nucleocapsid protein and the viral genome. May dysregulate normal immune and endothelial cell responses through an ITAM motif. Translocates to mitochondria, binds to host TUFM and recruits MAP1LC3B. These interactions induce mitochondrial autophagy and therefore destruction of host MAVS leading to inhibition of type I interferon (IFN) responses. Concomitant breakdown of glycoprotein N is apparently prevented by the nucleoprotein that may inhibit Gn-stimulated autophagosome-lysosome fusion. Interacts with the viral genomic RNA. Its function is as follows. Forms heterooctamers with glycoprotein N at the surface of the virion. Attaches the virion to host cell receptors including integrin ITGAV/ITGB3. This attachment induces virion internalization predominantly through clathrin-dependent endocytosis. Class II fusion protein that promotes fusion of viral membrane with host endosomal membrane after endocytosis of the virion. The protein is Envelopment polyprotein (GP) of Homo sapiens (Human).